A 232-amino-acid polypeptide reads, in one-letter code: Sugar fermentation stimulation protein homolog (232 aa).

It belongs to the SfsA family.

This Pelagibacter ubique (strain HTCC1062) protein is Sugar fermentation stimulation protein homolog.